We begin with the raw amino-acid sequence, 1413 residues long: Zinc finger SWIM domain-containing protein 8 (1413 aa).

A phosphoserine mark is found at Ser36, Ser48, and Ser53. The tract at residues Arg45–Gly65 is disordered. Residues Thr55–Gly65 show a composition bias toward gly residues. An SWIM-type zinc finger spans residues Tyr172–Ile208. A disordered region spans residues Glu600–Gln817. The segment covering His604 to Ser625 has biased composition (polar residues). Positions Ser704 to Ser715 are enriched in gly residues. Thr724 is subject to Phosphothreonine. The segment covering Ile729–Leu744 has biased composition (polar residues). Phosphoserine occurs at positions 738, 741, and 745. The segment covering Gly759–Ala794 has biased composition (low complexity). Residues Lys795–Ala811 are compositionally biased toward basic and acidic residues. A phosphoserine mark is found at Ser852 and Ser1412.

This sequence belongs to the ZSWIM8 family. As to quaternary structure, component of the SCF-like E3 ubiquitin-protein ligase complex which contains CUL3, RBX1, ELOB, ELOC and ZSWIM8. Interacts with DAB1.

It is found in the cytoplasm. The protein resides in the cytosol. It functions in the pathway protein modification; protein ubiquitination. Substrate recognition component of a SCF-like E3 ubiquitin-protein ligase complex that promotes target-directed microRNA degradation (TDMD), a process that mediates degradation of microRNAs (miRNAs). The SCF-like E3 ubiquitin-protein ligase complex acts by catalyzing ubiquitination and subsequent degradation of AGO proteins (AGO1, AGO2, AGO3 and/or AGO4), thereby exposing miRNAs for degradation. Specifically recognizes and binds AGO proteins when they are engaged with a TDMD target. May also acts as a regulator of axon guidance: specifically recognizes misfolded ROBO3 and promotes its ubiquitination and subsequent degradation. Plays an essential role for proper embryonic development of heart and lung. Controls protein quality of DAB1, a key signal molecule for brain development, thus protecting its signaling strength. Mechanistically, recognizes intrinsically disordered regions of DAB1 and eliminates misfolded DAB1 that cannot be properly phosphorylated. The polypeptide is Zinc finger SWIM domain-containing protein 8 (Bos taurus (Bovine)).